The following is a 552-amino-acid chain: Glucose-6-phosphate isomerase (552 aa).

The active-site Proton donor is the E359. Catalysis depends on residues H390 and K514.

Belongs to the GPI family.

Its subcellular location is the cytoplasm. The catalysed reaction is alpha-D-glucose 6-phosphate = beta-D-fructose 6-phosphate. It functions in the pathway carbohydrate biosynthesis; gluconeogenesis. It participates in carbohydrate degradation; glycolysis; D-glyceraldehyde 3-phosphate and glycerone phosphate from D-glucose: step 2/4. Its function is as follows. Catalyzes the reversible isomerization of glucose-6-phosphate to fructose-6-phosphate. This Streptomyces griseus subsp. griseus (strain JCM 4626 / CBS 651.72 / NBRC 13350 / KCC S-0626 / ISP 5235) protein is Glucose-6-phosphate isomerase.